The following is a 151-amino-acid chain: Transcriptional regulator MraZ (151 aa).

SpoVT-AbrB domains lie at 5–51 and 81–124; these read AHEL…PVAE and AEIL…GREQ.

The protein belongs to the MraZ family. As to quaternary structure, forms oligomers.

Its subcellular location is the cytoplasm. It is found in the nucleoid. The chain is Transcriptional regulator MraZ from Neisseria meningitidis serogroup A / serotype 4A (strain DSM 15465 / Z2491).